The chain runs to 196 residues: Prefoldin subunit 3 (196 aa).

At alanine 2 the chain carries N-acetylalanine. Lysine 58 is subject to N6-acetyllysine.

Belongs to the prefoldin subunit alpha family. In terms of assembly, heterohexamer of two PFD-alpha type and four PFD-beta type subunits. Binds to the C-terminal part of VHL.

The protein resides in the cytoplasm. It localises to the nucleus. Its function is as follows. Binds specifically to cytosolic chaperonin (c-CPN) and transfers target proteins to it. Binds to nascent polypeptide chain and promotes folding in an environment in which there are many competing pathways for nonnative proteins. The polypeptide is Prefoldin subunit 3 (Vbp1) (Mus musculus (Mouse)).